Consider the following 566-residue polypeptide: Urease subunit alpha 2 (566 aa).

In terms of domain architecture, Urease spans glycine 128–phenylalanine 566. Ni(2+)-binding residues include histidine 133, histidine 135, and lysine 216. An N6-carboxylysine modification is found at lysine 216. Histidine 218 contributes to the substrate binding site. The Ni(2+) site is built by histidine 245 and histidine 271. Catalysis depends on histidine 319, which acts as the Proton donor. Aspartate 359 is a Ni(2+) binding site.

It belongs to the metallo-dependent hydrolases superfamily. Urease alpha subunit family. As to quaternary structure, may form a heterohexamer of 3 UreC (alpha) and 3 UreAB (gamma/beta) subunits. May also form a heterotrimer of UreA (gamma), UreB (beta) and UreC (alpha) subunits. Three heterotrimers associate to form the active enzyme. The cofactor is Ni cation. Carboxylation allows a single lysine to coordinate two nickel ions.

The protein resides in the cytoplasm. The catalysed reaction is urea + 2 H2O + H(+) = hydrogencarbonate + 2 NH4(+). Its pathway is nitrogen metabolism; urea degradation; CO(2) and NH(3) from urea (urease route): step 1/1. This is Urease subunit alpha 2 from Pseudomonas syringae pv. syringae (strain B728a).